Reading from the N-terminus, the 84-residue chain is Small ribosomal subunit protein uS15 (84 aa).

Belongs to the universal ribosomal protein uS15 family. Part of the 30S ribosomal subunit. Forms a bridge to the 50S subunit in the 70S ribosome, contacting the 23S rRNA.

Functionally, one of the primary rRNA binding proteins, it binds directly to 16S rRNA where it helps nucleate assembly of the platform of the 30S subunit by binding and bridging several RNA helices of the 16S rRNA. In terms of biological role, forms an intersubunit bridge (bridge B4) with the 23S rRNA of the 50S subunit in the ribosome. The chain is Small ribosomal subunit protein uS15 from Akkermansia muciniphila (strain ATCC BAA-835 / DSM 22959 / JCM 33894 / BCRC 81048 / CCUG 64013 / CIP 107961 / Muc).